The primary structure comprises 489 residues: Serine/threonine-protein kinase dyf-5 (489 aa).

The 281-residue stretch at 11–291 folds into the Protein kinase domain; the sequence is YLMTKRLGDG…ANQSLRYKYF (281 aa). ATP contacts are provided by residues 17–25 and lysine 40; that span reads LGDGTFGEV. The Proton acceptor role is filled by aspartate 132. Disordered regions lie at residues 366–385 and 452–489; these read EKSD…KPTA and QTGP…KYVK. Over residues 458-473 the composition is skewed to low complexity; the sequence is SNQTNNHSANNSHSPN.

It belongs to the protein kinase superfamily. CMGC Ser/Thr protein kinase family. RCK subfamily. The cofactor is Mg(2+). As to expression, expressed in head neurons including amphid and labial sensory neurons and 3 pairs of neurons in the tail including phasmid sensory neurons. In male, expressed in the tail including the sensory rays and the spicule.

It localises to the perikaryon. The protein localises to the cell projection. It is found in the dendrite. Its subcellular location is the axon. The protein resides in the cilium. The enzyme catalyses L-seryl-[protein] + ATP = O-phospho-L-seryl-[protein] + ADP + H(+). It carries out the reaction L-threonyl-[protein] + ATP = O-phospho-L-threonyl-[protein] + ADP + H(+). Its function is as follows. Serine/threonine-protein kinase which is required for ciliogenesis. Regulates the length and the morphology of sensory neuron cilia. In addition, plays a role in the anterograde intraflagellar transport (IFT) in the cilia by regulating the undocking of kinesin-II motor complex (composed of klp-11, klp-20 and kap-1) before reaching the distal segment and the docking of kinesin motor osm-3 onto IFT cargos. The protein is Serine/threonine-protein kinase dyf-5 of Caenorhabditis elegans.